The chain runs to 253 residues: 5'/3'-nucleotidase SurE (253 aa).

The a divalent metal cation site is built by D8, D9, S39, and N92.

The protein belongs to the SurE nucleotidase family. The cofactor is a divalent metal cation.

The protein localises to the cytoplasm. The enzyme catalyses a ribonucleoside 5'-phosphate + H2O = a ribonucleoside + phosphate. The catalysed reaction is a ribonucleoside 3'-phosphate + H2O = a ribonucleoside + phosphate. It carries out the reaction [phosphate](n) + H2O = [phosphate](n-1) + phosphate + H(+). Functionally, nucleotidase with a broad substrate specificity as it can dephosphorylate various ribo- and deoxyribonucleoside 5'-monophosphates and ribonucleoside 3'-monophosphates with highest affinity to 3'-AMP. Also hydrolyzes polyphosphate (exopolyphosphatase activity) with the preference for short-chain-length substrates (P20-25). Might be involved in the regulation of dNTP and NTP pools, and in the turnover of 3'-mononucleotides produced by numerous intracellular RNases (T1, T2, and F) during the degradation of various RNAs. The polypeptide is 5'/3'-nucleotidase SurE (Shigella boydii serotype 18 (strain CDC 3083-94 / BS512)).